The chain runs to 342 residues: MKALAKLERGPGLTLTRVKRPEVGHNDVLIKIRRTAICGTDIHIWKWDDWAQKTIPVPMHVGHEYVGEIVEMGQEVRGFAIGDRVSGEGHITCGFCRNCRAGRRHLCRNTVGVGVNREGAFAEYLAIPAFNAFKIPPEISDDLASIFDPFGNATHTALSFNLVGEDVLITGAGPIGIMAVAIAKHVGARNVVITDINDYRLELARKMGATRAVNVARESLRDVMSDLHMTEGFDVGLEMSGVPSAFTSMLEAMNHGGKVALLGIPPAQTAIDWNQVIFKGLEIKGIYGREMFETWYKMVAMLQSGLDLSPIITHRFAADDYEKGFAAMLSGESGKVILDWTA.

Cys-38 is a binding site for Zn(2+). Active-site charge relay system residues include Thr-40 and His-43. 6 residues coordinate Zn(2+): His-63, Glu-64, Cys-93, Cys-96, Cys-99, and Cys-107. Residues Ile-175, Asp-195, Arg-200, 262 to 264, and 286 to 287 each bind NAD(+); these read LGI and IY.

This sequence belongs to the zinc-containing alcohol dehydrogenase family. In terms of assembly, homotetramer. Requires Zn(2+) as cofactor.

Its subcellular location is the cytoplasm. The catalysed reaction is L-threonine + NAD(+) = (2S)-2-amino-3-oxobutanoate + NADH + H(+). Its pathway is amino-acid degradation; L-threonine degradation via oxydo-reductase pathway; glycine from L-threonine: step 1/2. In terms of biological role, catalyzes the NAD(+)-dependent oxidation of L-threonine to 2-amino-3-ketobutyrate. The protein is L-threonine 3-dehydrogenase of Burkholderia lata (strain ATCC 17760 / DSM 23089 / LMG 22485 / NCIMB 9086 / R18194 / 383).